A 333-amino-acid chain; its full sequence is Serine/threonine-protein phosphatase 4 catalytic subunit 1 (333 aa).

The segment at 1-28 is disordered; the sequence is MALACTDSANSTFSRVDSPTSGPSDQLT. Over residues 7–27 the composition is skewed to polar residues; the sequence is DSANSTFSRVDSPTSGPSDQL. 4 residues coordinate Mn(2+): aspartate 79, histidine 81, aspartate 107, and asparagine 139. The active-site Proton donor is the histidine 140. Residues histidine 189 and histidine 264 each contribute to the Mn(2+) site. Leucine 333 carries the post-translational modification Leucine methyl ester.

Belongs to the PPP phosphatase family. PP-4 (PP-X) subfamily. Serine/threonine-protein phosphatase 4 (PP4) occurs in different assemblies of the catalytic and one or more regulatory subunits. The regulatory subunits are likely to be ppfr-1, ppfr-2, ppfr-4 and smk-1. Interacts with mei-1. Mn(2+) serves as cofactor. Methylation at the C-terminal Leu-333 is critical for interactions with regulatory subunits.

Its subcellular location is the cytoplasm. The protein localises to the cytoskeleton. The protein resides in the microtubule organizing center. It is found in the centrosome. The enzyme catalyses O-phospho-L-seryl-[protein] + H2O = L-seryl-[protein] + phosphate. The catalysed reaction is O-phospho-L-threonyl-[protein] + H2O = L-threonyl-[protein] + phosphate. Its function is as follows. Protein phosphatase which plays an essential role in meiosis and in early embryonic mitosis. During spermatocyte meiosis and the first embryonic mitosis, regulates centrosome maturation, and thus spindle formation, by recruiting some of the components of the pericentriolar material (PCM). During oocyte meiosis I, regulates meiotic chromosome dynamics including synapsis-independent chromosome pairing, restriction of synapsis to homologous chromosomes, programmed DNA double-strand break initiation and crossover formation resulting in chiasma formation. During oocyte meiosis II and probably together with regulatory subunit ppfr-1, may regulate microtubule severing by dephosphorylating and activating mei-1, a component of the katanin microtubule severing complex. The sequence is that of Serine/threonine-protein phosphatase 4 catalytic subunit 1 from Caenorhabditis elegans.